Here is a 273-residue protein sequence, read N- to C-terminus: MRLIILDTAEYVGEWSAKYVMKRINDFKPGPDRYFTLGLPTGSTPLGMYRHLIKFHQQGRISFKYVKTFNMDEYVDLPRDHPESYHYFMWHNFFKHIDIDPENVHILDGNAPDLVAECDAFEEKIRAAGGIELFIGGIGPDGHIAFNEPGSSLASRTRVKTLAQDTLEANARFFGNDISKVPKQALTVGVATVMDAREVMIMILGSHKAFALYKAIEEGVNHMWTVSAFQQHPHTIMICDEDATLELRVKTVKYFKDCYKLSADGLEQATLRN.

The active-site Proton acceptor; for enolization step is the Asp-72. Asp-141 serves as the catalytic For ring-opening step. His-143 (proton acceptor; for ring-opening step) is an active-site residue. Glu-148 (for ring-opening step) is an active-site residue.

The protein belongs to the glucosamine/galactosamine-6-phosphate isomerase family. In terms of assembly, homohexamer.

Its subcellular location is the cytoplasm. The catalysed reaction is alpha-D-glucosamine 6-phosphate + H2O = beta-D-fructose 6-phosphate + NH4(+). Its pathway is nucleotide-sugar biosynthesis; UDP-N-acetyl-alpha-D-glucosamine biosynthesis; alpha-D-glucosamine 6-phosphate from D-fructose 6-phosphate: step 1/1. Functionally, catalyzes the reversible conversion of alpha-D-glucosamine 6-phosphate (GlcN-6P) into beta-D-fructose 6-phosphate (Fru-6P) and ammonium ion, a regulatory reaction step in de novo uridine diphosphate-N-acetyl-alpha-D-glucosamine (UDP-GlcNAc) biosynthesis via hexosamine pathway. This is Glucosamine-6-phosphate deaminase (Gnpda1) from Anopheles gambiae (African malaria mosquito).